The primary structure comprises 747 residues: Protein FAM83C (747 aa).

Residues 1-309 (MFGGPGPGVL…LYAESQPVEG (309 aa)) are DUF1669. Disordered stretches follow at residues 322-352 (LRPPPVALAFRPDVPSPTSSLPSSTSLSSIK), 374-412 (TGVVSSSLGPARREASGQPSLHRQLSDPNHGSPPGLYRA), 462-484 (LSRFPENGLPGSQEPSPLRGRWV), 517-550 (AREVGDPDSGVTPNSGPLRPGEQAPEDRRLSPSQ), 588-633 (NQSR…LGHS), 646-672 (GEGPGPNGLPISSPARTAGAGSGDEKR), and 692-715 (ARQGTEPGGPKGGHLNGGNSDLVR). Residues 328–350 (ALAFRPDVPSPTSSLPSSTSLSS) are compositionally biased toward low complexity. The span at 390-402 (GQPSLHRQLSDPN) shows a compositional bias: polar residues. Over residues 697 to 707 (EPGGPKGGHLN) the composition is skewed to gly residues.

It belongs to the FAM83 family. In terms of assembly, may interact with RAF1. In terms of processing, phosphorylated in vitro by CSNK1A1.

Its subcellular location is the cytoplasm. Its function is as follows. May play a role in MAPK signaling. The protein is Protein FAM83C of Homo sapiens (Human).